The sequence spans 129 residues: Selenoprotein M (129 aa).

The N-terminal stretch at 1 to 19 (MARGLAVFFLLAGACLALA) is a signal peptide. Catalysis depends on nucleophile residues C35 and U38. U38 is a non-standard amino acid (selenocysteine). The interval 107 to 129 (KSSKDEQVPEEYQEGPYMEKEEL) is disordered. Positions 126–129 (KEEL) match the Prevents secretion from ER motif.

This sequence belongs to the selenoprotein M/F family. High expression levels observed in hepatopancreas, testis, ovaries and intestine. Also expressed in heart, stomach, gills, cranial ganglia, muscle and hematocytes.

The protein localises to the endoplasmic reticulum. In terms of biological role, may function as a thiol-disulfide oxidoreductase that participates in disulfide bond formation. Involved in the regulation of reproduction during the period of rapid gonadal development. In Eriocheir sinensis (Chinese mitten crab), this protein is Selenoprotein M.